We begin with the raw amino-acid sequence, 183 residues long: UPF0134 protein MPN_100 (183 aa).

The protein belongs to the UPF0134 family.

In Mycoplasma pneumoniae (strain ATCC 29342 / M129 / Subtype 1) (Mycoplasmoides pneumoniae), this protein is UPF0134 protein MPN_100.